The sequence spans 196 residues: dCTP deaminase, dUMP-forming (196 aa).

DCTP is bound by residues 101–106 (KSSLGR), D119, 127–129 (TLE), Q148, Y162, and Q174. The active-site Proton donor/acceptor is the E129.

Belongs to the dCTP deaminase family. In terms of assembly, homotrimer.

The enzyme catalyses dCTP + 2 H2O = dUMP + NH4(+) + diphosphate. Its pathway is pyrimidine metabolism; dUMP biosynthesis; dUMP from dCTP: step 1/1. In terms of biological role, bifunctional enzyme that catalyzes both the deamination of dCTP to dUTP and the hydrolysis of dUTP to dUMP without releasing the toxic dUTP intermediate. The sequence is that of dCTP deaminase, dUMP-forming from Tropheryma whipplei (strain TW08/27) (Whipple's bacillus).